A 95-amino-acid chain; its full sequence is Protein J1 homolog (95 aa).

Belongs to the chordopoxvirinae J1 family. As to quaternary structure, homodimer. Part of a complex composed of A30, G7, F10 kinase, A15, D2, D3, and J1. Interacts with A45.

The protein resides in the virion. The protein localises to the host cytoplasm. Late protein which is a part of a large complex required for early virion morphogenesis. This complex participates in the formation of virosomes and the incorporation of virosomal contents into nascent immature virions. J1 protein is required for DNA packaging during immature virions (IV) formation. This chain is Protein J1 homolog, found in Sus scrofa (Pig).